The primary structure comprises 257 residues: MALAKRIIPCLDVTAGRVVKGVNFVELRDAGDPVEIARRYDDQGADELTFLDITATSDQRDLILPIIEAVASQVFIPLTVGGGVRAVEDVRRLLNAGADKISMNSSAVANPQLVKDATDKYGSQCIVVAIDAKRVSAEGEVPRWEVFTHGGRKATGLDAVEWARKMAELGAGEILLTSMDRDGTKSGFDLALTRAVSDAVPIPVIASGGVGNLQHLADGIKEGHADAVLAASIFHYGEHTVGEAKRFMADQGISVRL.

Residues D12 and D131 contribute to the active site.

Belongs to the HisA/HisF family. Heterodimer of HisH and HisF.

The protein resides in the cytoplasm. It carries out the reaction 5-[(5-phospho-1-deoxy-D-ribulos-1-ylimino)methylamino]-1-(5-phospho-beta-D-ribosyl)imidazole-4-carboxamide + L-glutamine = D-erythro-1-(imidazol-4-yl)glycerol 3-phosphate + 5-amino-1-(5-phospho-beta-D-ribosyl)imidazole-4-carboxamide + L-glutamate + H(+). Its pathway is amino-acid biosynthesis; L-histidine biosynthesis; L-histidine from 5-phospho-alpha-D-ribose 1-diphosphate: step 5/9. Functionally, IGPS catalyzes the conversion of PRFAR and glutamine to IGP, AICAR and glutamate. The HisF subunit catalyzes the cyclization activity that produces IGP and AICAR from PRFAR using the ammonia provided by the HisH subunit. The chain is Imidazole glycerol phosphate synthase subunit HisF from Paraburkholderia xenovorans (strain LB400).